A 512-amino-acid chain; its full sequence is Phospho-2-dehydro-3-deoxyheptonate aldolase 2, chloroplastic (512 aa).

A chloroplast-targeting transit peptide spans 1-57 (MALTATATTRGGSALPNSCLQTPKFQSLQKPTFISSFPTNKKTKPRTKHISAVQSPP). Residues 37–57 (FPTNKKTKPRTKHISAVQSPP) are disordered. Cys126 provides a ligand contact to Mn(2+). Substrate contacts are provided by residues Arg165, 324-325 (ER), Lys347, and Arg378. Mn(2+) contacts are provided by His410, Glu452, and Asp482.

Belongs to the class-II DAHP synthase family. In terms of assembly, homodimer. The cofactor is Mn(2+). As to expression, mostly expressed in leaves and stems, and, to a lower extent, in roots, stigmas, anthers, petal tubes, petal limbs and sepals.

The protein localises to the plastid. It is found in the chloroplast. It catalyses the reaction D-erythrose 4-phosphate + phosphoenolpyruvate + H2O = 7-phospho-2-dehydro-3-deoxy-D-arabino-heptonate + phosphate. It participates in metabolic intermediate biosynthesis; chorismate biosynthesis; chorismate from D-erythrose 4-phosphate and phosphoenolpyruvate: step 1/7. In terms of biological role, involved in the production of volatile organic compounds (VOCs). Catalyzes an aldol-like condensation reaction between phosphoenolpyruvate (PEP) and D-erythrose 4-phosphate (E4P) to generate 3-deoxy-D-arabino-heptulosonate 7-phosphate (DAH7P) and inorganic phosphate. The polypeptide is Phospho-2-dehydro-3-deoxyheptonate aldolase 2, chloroplastic (Petunia hybrida (Petunia)).